The chain runs to 273 residues: Small ribosomal subunit protein uS2 (273 aa).

The protein belongs to the universal ribosomal protein uS2 family.

The polypeptide is Small ribosomal subunit protein uS2 (Mycolicibacterium vanbaalenii (strain DSM 7251 / JCM 13017 / BCRC 16820 / KCTC 9966 / NRRL B-24157 / PYR-1) (Mycobacterium vanbaalenii)).